Reading from the N-terminus, the 147-residue chain is Ras-related protein RabK2 (147 aa).

Residues 11 to 15 (NTHGS) and 63 to 66 (TKSD) contribute to the GTP site. Cysteine 145 carries S-geranylgeranyl cysteine lipidation.

The protein belongs to the small GTPase superfamily. Rab family.

It is found in the cell membrane. The chain is Ras-related protein RabK2 (rabK2) from Dictyostelium discoideum (Social amoeba).